A 220-amino-acid polypeptide reads, in one-letter code: ATP-dependent Clp protease proteolytic subunit 1 (220 aa).

The Nucleophile role is filled by Ser-118. The active site involves His-143.

It belongs to the peptidase S14 family. In terms of assembly, fourteen ClpP subunits assemble into 2 heptameric rings which stack back to back to give a disk-like structure with a central cavity, resembling the structure of eukaryotic proteasomes.

It is found in the cytoplasm. It catalyses the reaction Hydrolysis of proteins to small peptides in the presence of ATP and magnesium. alpha-casein is the usual test substrate. In the absence of ATP, only oligopeptides shorter than five residues are hydrolyzed (such as succinyl-Leu-Tyr-|-NHMec, and Leu-Tyr-Leu-|-Tyr-Trp, in which cleavage of the -Tyr-|-Leu- and -Tyr-|-Trp bonds also occurs).. In terms of biological role, cleaves peptides in various proteins in a process that requires ATP hydrolysis. Has a chymotrypsin-like activity. Plays a major role in the degradation of misfolded proteins. This Rhodococcus jostii (strain RHA1) protein is ATP-dependent Clp protease proteolytic subunit 1.